Here is a 539-residue protein sequence, read N- to C-terminus: Glycine betaine transporter 2 (539 aa).

12 helical membrane passes run 44 to 64 (LTNPVFWLSGSFLSLFVLLAL), 85 to 105 (FGAYWQVLLLLNFLIGLALAF), 129 to 149 (IVLCTLLAGGGVFWAAAEPIA), 175 to 195 (FMHWGFLAWAILGCLSSIVLM), 231 to 251 (CSIIAVAAGTIGPIGFLGLQI), 265 to 285 (FITQSMVIVAAIVMYTLSALS), 299 to 319 (IILSVLLIGYILFFGPTSFII), 348 to 368 (WWTVFFWGWFIGYGPMMAIFI), 380 to 400 (LILSISIAAPLITCFWFSIVG), 426 to 446 (VLLAITGELPFPMIISVLFLI), 480 to 500 (FWGLMMGVVAIALISMGSGGI), and 503 to 523 (LQSFIVITAVPVSFILLPSIL).

The protein belongs to the BCCT transporter (TC 2.A.15) family.

It localises to the cell inner membrane. In terms of biological role, involved in the uptake of the osmoprotectant glycine betaine. In Vibrio parahaemolyticus serotype O3:K6 (strain RIMD 2210633), this protein is Glycine betaine transporter 2.